We begin with the raw amino-acid sequence, 141 residues long: Vesicle-associated membrane protein 4 (141 aa).

Positions 1–51 are disordered; that stretch reads MPPKFKRHLNDDDVTGSVKSERRNLLEDDSDEEEDFFLRGPSGPRFGPRND. Residues 1–118 are Cytoplasmic-facing; the sequence is MPPKFKRHLN…MWWRGCKIKA (118 aa). A phosphoserine mark is found at Ser-17 and Ser-30. Positions 52-112 constitute a v-SNARE coiled-coil homology domain; sequence KIKHVQNQVD…KQLRRQMWWR (61 aa). The helical; Anchor for type IV membrane protein transmembrane segment at 119-139 threads the bilayer; it reads IMALAAAILLLMIIILIVVKF. Over 140–141 the chain is Vesicular; the sequence is RT.

Belongs to the synaptobrevin family. As to quaternary structure, identified in a complex containing STX6, STX12, VAMP4 and VTI1A. Interacts with BAIAP3; this interaction is increased in the presence of calcium. In terms of processing, (Microbial infection) Targeted and hydrolyzed by C.botulinum neurotoxin type X (BoNT/X) which hydrolyzes the 87-Arg-|-Ser-88 bond and probably inhibits neurotransmitter release. It remains unknown whether BoNT/X is ever produced, or what organisms it targets.

It localises to the golgi apparatus. It is found in the trans-Golgi network membrane. In terms of biological role, involved in the pathway that functions to remove an inhibitor (probably synaptotagmin-4) of calcium-triggered exocytosis during the maturation of secretory granules. May be a marker for this sorting pathway that is critical for remodeling the secretory response of granule. The sequence is that of Vesicle-associated membrane protein 4 (Vamp4) from Mus musculus (Mouse).